Consider the following 207-residue polypeptide: LexA repressor (207 aa).

The H-T-H motif DNA-binding region spans 28-48 (RAEIARELGFRSANAAEEHLK). Catalysis depends on for autocatalytic cleavage activity residues S124 and K161.

It belongs to the peptidase S24 family. Homodimer.

The enzyme catalyses Hydrolysis of Ala-|-Gly bond in repressor LexA.. In terms of biological role, represses a number of genes involved in the response to DNA damage (SOS response), including recA and lexA. In the presence of single-stranded DNA, RecA interacts with LexA causing an autocatalytic cleavage which disrupts the DNA-binding part of LexA, leading to derepression of the SOS regulon and eventually DNA repair. The polypeptide is LexA repressor (Aliivibrio salmonicida (strain LFI1238) (Vibrio salmonicida (strain LFI1238))).